An 80-amino-acid chain; its full sequence is Cytochrome c oxidase subunit 7B, mitochondrial (80 aa).

The transit peptide at 1–24 (MLPLAKNALSRLQVRSIQQVVARQ) directs the protein to the mitochondrion. Residues 25-32 (SHQKKTPT) lie on the Mitochondrial matrix side of the membrane. A helical membrane pass occupies residues 33-59 (FHDKYGNAVLAGGSIFCISAWTYTATQ). Over 60-80 (IGIEWNLSPVGRVTPKEWRDQ) the chain is Mitochondrial intermembrane.

This sequence belongs to the cytochrome c oxidase VIIb family. As to quaternary structure, component of the cytochrome c oxidase (complex IV, CIV), a multisubunit enzyme composed of 14 subunits. The complex is composed of a catalytic core of 3 subunits MT-CO1, MT-CO2 and MT-CO3, encoded in the mitochondrial DNA, and 11 supernumerary subunits COX4I, COX5A, COX5B, COX6A, COX6B, COX6C, COX7A, COX7B, COX7C, COX8 and NDUFA4, which are encoded in the nuclear genome. The complex exists as a monomer or a dimer and forms supercomplexes (SCs) in the inner mitochondrial membrane with NADH-ubiquinone oxidoreductase (complex I, CI) and ubiquinol-cytochrome c oxidoreductase (cytochrome b-c1 complex, complex III, CIII), resulting in different assemblies (supercomplex SCI(1)III(2)IV(1) and megacomplex MCI(2)III(2)IV(2)).

Its subcellular location is the mitochondrion inner membrane. Its pathway is energy metabolism; oxidative phosphorylation. Functionally, component of the cytochrome c oxidase, the last enzyme in the mitochondrial electron transport chain which drives oxidative phosphorylation. The respiratory chain contains 3 multisubunit complexes succinate dehydrogenase (complex II, CII), ubiquinol-cytochrome c oxidoreductase (cytochrome b-c1 complex, complex III, CIII) and cytochrome c oxidase (complex IV, CIV), that cooperate to transfer electrons derived from NADH and succinate to molecular oxygen, creating an electrochemical gradient over the inner membrane that drives transmembrane transport and the ATP synthase. Cytochrome c oxidase is the component of the respiratory chain that catalyzes the reduction of oxygen to water. Electrons originating from reduced cytochrome c in the intermembrane space (IMS) are transferred via the dinuclear copper A center (CU(A)) of subunit 2 and heme A of subunit 1 to the active site in subunit 1, a binuclear center (BNC) formed by heme A3 and copper B (CU(B)). The BNC reduces molecular oxygen to 2 water molecules using 4 electrons from cytochrome c in the IMS and 4 protons from the mitochondrial matrix. Plays a role in proper central nervous system (CNS) development in vertebrates. The sequence is that of Cytochrome c oxidase subunit 7B, mitochondrial (Cox7b) from Rattus norvegicus (Rat).